A 122-amino-acid chain; its full sequence is Large ribosomal subunit protein uL14 (122 aa).

It belongs to the universal ribosomal protein uL14 family. In terms of assembly, part of the 50S ribosomal subunit. Forms a cluster with proteins L3 and L19. In the 70S ribosome, L14 and L19 interact and together make contacts with the 16S rRNA in bridges B5 and B8.

Binds to 23S rRNA. Forms part of two intersubunit bridges in the 70S ribosome. This Pseudomonas aeruginosa (strain LESB58) protein is Large ribosomal subunit protein uL14.